The sequence spans 383 residues: Ribosomal RNA large subunit methyltransferase G (383 aa).

The protein belongs to the methyltransferase superfamily. RlmG family.

It localises to the cytoplasm. It catalyses the reaction guanosine(1835) in 23S rRNA + S-adenosyl-L-methionine = N(2)-methylguanosine(1835) in 23S rRNA + S-adenosyl-L-homocysteine + H(+). Functionally, specifically methylates the guanine in position 1835 (m2G1835) of 23S rRNA. In Shewanella denitrificans (strain OS217 / ATCC BAA-1090 / DSM 15013), this protein is Ribosomal RNA large subunit methyltransferase G.